A 562-amino-acid chain; its full sequence is Arylsulfatase H (562 aa).

D15, D16, and C55 together coordinate Ca(2+). The active-site Nucleophile is C55. C55 is subject to 3-oxoalanine (Cys). K115 contacts substrate. H117 is an active-site residue. 2 helical membrane-spanning segments follow: residues 167 to 187 (LWIS…PKYA) and 189 to 209 (WFVV…LFFI). H271 provides a ligand contact to substrate. Ca(2+) contacts are provided by D323 and N324.

The protein belongs to the sulfatase family. It depends on Ca(2+) as a cofactor. In terms of processing, the conversion to 3-oxoalanine (also known as C-formylglycine, FGly), of a serine or cysteine residue in prokaryotes and of a cysteine residue in eukaryotes, is critical for catalytic activity.

It localises to the membrane. This Canis lupus familiaris (Dog) protein is Arylsulfatase H (ARSH).